The following is a 1520-amino-acid chain: DNA-directed RNA polymerase subunit beta'' (1520 aa).

Zn(2+) is bound by residues Cys-220, Cys-296, Cys-303, and Cys-306. 2 stretches are compositionally biased toward basic and acidic residues: residues 645–654 and 664–674; these read TREEEYRTRE and PENKYRTREGE. 2 disordered regions span residues 645-676 and 705-786; these read TREE…GEGE and YRTL…KKEG. Composition is skewed to acidic residues over residues 730–748 and 756–779; these read GEYE…SSED and TLEE…PEED.

It belongs to the RNA polymerase beta' chain family. RpoC2 subfamily. In plastids the minimal PEP RNA polymerase catalytic core is composed of four subunits: alpha, beta, beta', and beta''. When a (nuclear-encoded) sigma factor is associated with the core the holoenzyme is formed, which can initiate transcription. Zn(2+) serves as cofactor.

It is found in the plastid. Its subcellular location is the chloroplast. The catalysed reaction is RNA(n) + a ribonucleoside 5'-triphosphate = RNA(n+1) + diphosphate. In terms of biological role, DNA-dependent RNA polymerase catalyzes the transcription of DNA into RNA using the four ribonucleoside triphosphates as substrates. The sequence is that of DNA-directed RNA polymerase subunit beta'' from Sorghum bicolor (Sorghum).